Here is a 198-residue protein sequence, read N- to C-terminus: FMN-dependent NADH:quinone oxidoreductase (198 aa).

96 to 99 is a binding site for FMN; sequence MYNF.

This sequence belongs to the azoreductase type 1 family. As to quaternary structure, homodimer. Requires FMN as cofactor.

The enzyme catalyses 2 a quinone + NADH + H(+) = 2 a 1,4-benzosemiquinone + NAD(+). It carries out the reaction N,N-dimethyl-1,4-phenylenediamine + anthranilate + 2 NAD(+) = 2-(4-dimethylaminophenyl)diazenylbenzoate + 2 NADH + 2 H(+). Quinone reductase that provides resistance to thiol-specific stress caused by electrophilic quinones. Functionally, also exhibits azoreductase activity. Catalyzes the reductive cleavage of the azo bond in aromatic azo compounds to the corresponding amines. The polypeptide is FMN-dependent NADH:quinone oxidoreductase (Burkholderia thailandensis (strain ATCC 700388 / DSM 13276 / CCUG 48851 / CIP 106301 / E264)).